Reading from the N-terminus, the 148-residue chain is UPF0178 protein SH2212 (148 aa).

The protein belongs to the UPF0178 family.

This Staphylococcus haemolyticus (strain JCSC1435) protein is UPF0178 protein SH2212.